The following is a 483-amino-acid chain: ATP synthase subunit beta (483 aa).

Position 167–174 (167–174) interacts with ATP; the sequence is GGAGVGKT.

The protein belongs to the ATPase alpha/beta chains family. F-type ATPases have 2 components, CF(1) - the catalytic core - and CF(0) - the membrane proton channel. CF(1) has five subunits: alpha(3), beta(3), gamma(1), delta(1), epsilon(1). CF(0) has three main subunits: a(1), b(2) and c(9-12). The alpha and beta chains form an alternating ring which encloses part of the gamma chain. CF(1) is attached to CF(0) by a central stalk formed by the gamma and epsilon chains, while a peripheral stalk is formed by the delta and b chains.

It is found in the cell membrane. It catalyses the reaction ATP + H2O + 4 H(+)(in) = ADP + phosphate + 5 H(+)(out). Its function is as follows. Produces ATP from ADP in the presence of a proton gradient across the membrane. The catalytic sites are hosted primarily by the beta subunits. The sequence is that of ATP synthase subunit beta from Paenarthrobacter aurescens (strain TC1).